The sequence spans 853 residues: Aminotransferase PigE (853 aa).

Pyridoxal 5'-phosphate is bound at residue 503–504; it reads GT. Residue K645 is modified to N6-(pyridoxal phosphate)lysine. T680 provides a ligand contact to pyridoxal 5'-phosphate.

This sequence belongs to the class-III pyridoxal-phosphate-dependent aminotransferase family. Homodimer. The cofactor is pyridoxal 5'-phosphate.

It participates in antibiotic biosynthesis; prodigiosin biosynthesis. Functionally, involved in the biosynthesis of 2-methyl-3-n-amyl-pyrrole (MAP), one of the terminal products involved in the biosynthesis of the red antibiotic prodigiosin (Pig). Catalyzes the transamination to the aldehyde group of 3-acetyloctanal, resulting in an aminoketone, which spontaneously cyclizes to yield the dihydro form of MAP (H2MAP). This is Aminotransferase PigE from Serratia sp. (strain FS14).